We begin with the raw amino-acid sequence, 374 residues long: Alanine racemase (374 aa).

Lys35 acts as the Proton acceptor; specific for D-alanine in catalysis. N6-(pyridoxal phosphate)lysine is present on Lys35. Arg133 serves as a coordination point for substrate. Tyr264 functions as the Proton acceptor; specific for L-alanine in the catalytic mechanism. Met312 contacts substrate.

This sequence belongs to the alanine racemase family. The cofactor is pyridoxal 5'-phosphate.

The enzyme catalyses L-alanine = D-alanine. The protein operates within amino-acid biosynthesis; D-alanine biosynthesis; D-alanine from L-alanine: step 1/1. In terms of biological role, catalyzes the interconversion of L-alanine and D-alanine. May also act on other amino acids. This Thermobifida fusca (strain YX) protein is Alanine racemase (alr).